Consider the following 67-residue polypeptide: Medusin-H1 (67 aa).

The N-terminal stretch at 1 to 22 is a signal peptide; sequence MDFLKKSLFLVLFLGFFSLSIC. A propeptide spanning residues 23–48 is cleaved from the precursor; the sequence is EEEKRETEEKENEQEDDREERREEKR. The segment at 24 to 46 is disordered; that stretch reads EEKRETEEKENEQEDDREERREE. The segment covering 31 to 40 has biased composition (acidic residues); that stretch reads EKENEQEDDR. L66 is subject to Leucine amide.

The protein belongs to the frog skin active peptide (FSAP) family. Medusin subfamily. In terms of tissue distribution, expressed by the skin glands.

Its subcellular location is the secreted. In terms of biological role, antimicrobial peptide with activity against Gram-positive bacteria (S.aureus, MIC=32 mg/L) and fungi (C.albicans, MIC=128 mg/L). Shows weak hemolytic activity. In Pithecopus hypochondrialis (Orange-legged leaf frog), this protein is Medusin-H1.